The chain runs to 189 residues: Group XIIA secretory phospholipase A2 (189 aa).

The N-terminal stretch at 1 to 22 is a signal peptide; the sequence is MALLSRPALTLLLLLMAAVVRC. Positions 88, 90, and 92 each coordinate Ca(2+). Histidine 110 is a catalytic residue. Aspartate 111 contributes to the Ca(2+) binding site. Aspartate 125 is a catalytic residue.

Ca(2+) serves as cofactor. Abundantly expressed in heart, skeletal muscle, kidney, liver and pancreas.

It localises to the secreted. It is found in the cytoplasm. It carries out the reaction a 1,2-diacyl-sn-glycero-3-phosphocholine + H2O = a 1-acyl-sn-glycero-3-phosphocholine + a fatty acid + H(+). Functionally, PA2 catalyzes the calcium-dependent hydrolysis of the 2-acyl groups in 3-sn-phosphoglycerides. Does not exhibit detectable activity toward sn-2-arachidonoyl- or linoleoyl-phosphatidylcholine or -phosphatidylethanolamine. This Homo sapiens (Human) protein is Group XIIA secretory phospholipase A2 (PLA2G12A).